The following is a 129-amino-acid chain: Phosphoribosyl-AMP cyclohydrolase (129 aa).

Asp78 is a Mg(2+) binding site. Zn(2+) is bound at residue Cys79. Residues Asp80 and Asp82 each coordinate Mg(2+). Zn(2+) is bound by residues Cys96 and Cys103.

The protein belongs to the PRA-CH family. Homodimer. The cofactor is Mg(2+). Requires Zn(2+) as cofactor.

It is found in the cytoplasm. It carries out the reaction 1-(5-phospho-beta-D-ribosyl)-5'-AMP + H2O = 1-(5-phospho-beta-D-ribosyl)-5-[(5-phospho-beta-D-ribosylamino)methylideneamino]imidazole-4-carboxamide. Its pathway is amino-acid biosynthesis; L-histidine biosynthesis; L-histidine from 5-phospho-alpha-D-ribose 1-diphosphate: step 3/9. Functionally, catalyzes the hydrolysis of the adenine ring of phosphoribosyl-AMP. This chain is Phosphoribosyl-AMP cyclohydrolase, found in Nitrosomonas europaea (strain ATCC 19718 / CIP 103999 / KCTC 2705 / NBRC 14298).